A 294-amino-acid polypeptide reads, in one-letter code: Cytidine deaminase (294 aa).

CMP/dCMP-type deaminase domains are found at residues 48 to 168 (DDDA…FGPT) and 187 to 294 (AETD…RVTF). 89–91 (NME) lines the substrate pocket. Residue His102 coordinates Zn(2+). Catalysis depends on Glu104, which acts as the Proton donor. 2 residues coordinate Zn(2+): Cys129 and Cys132.

This sequence belongs to the cytidine and deoxycytidylate deaminase family. Homodimer. Zn(2+) serves as cofactor.

It carries out the reaction cytidine + H2O + H(+) = uridine + NH4(+). It catalyses the reaction 2'-deoxycytidine + H2O + H(+) = 2'-deoxyuridine + NH4(+). Its function is as follows. This enzyme scavenges exogenous and endogenous cytidine and 2'-deoxycytidine for UMP synthesis. This chain is Cytidine deaminase, found in Yersinia pseudotuberculosis serotype IB (strain PB1/+).